Consider the following 83-residue polypeptide: Large ribosomal subunit protein bL31B (83 aa).

It belongs to the bacterial ribosomal protein bL31 family. Type B subfamily. Part of the 50S ribosomal subunit.

Functionally, binds the 23S rRNA. The chain is Large ribosomal subunit protein bL31B from Hydrogenovibrio crunogenus (strain DSM 25203 / XCL-2) (Thiomicrospira crunogena).